The following is a 386-amino-acid chain: S-adenosylmethionine synthase (386 aa).

Position 16 (His-16) interacts with ATP. Residue Asp-18 coordinates Mg(2+). K(+) is bound at residue Glu-44. L-methionine-binding residues include Glu-57 and Gln-100. Residues 100–110 (QSPDINVGVDQ) are flexible loop. Residues 164–166 (DGK), 231–232 (RF), Asp-240, 246–247 (RK), Ala-263, and Lys-267 contribute to the ATP site. Asp-240 is an L-methionine binding site. Residue Lys-271 participates in L-methionine binding.

This sequence belongs to the AdoMet synthase family. Homotetramer; dimer of dimers. Mg(2+) serves as cofactor. Requires K(+) as cofactor.

It localises to the cytoplasm. It carries out the reaction L-methionine + ATP + H2O = S-adenosyl-L-methionine + phosphate + diphosphate. It functions in the pathway amino-acid biosynthesis; S-adenosyl-L-methionine biosynthesis; S-adenosyl-L-methionine from L-methionine: step 1/1. In terms of biological role, catalyzes the formation of S-adenosylmethionine (AdoMet) from methionine and ATP. The overall synthetic reaction is composed of two sequential steps, AdoMet formation and the subsequent tripolyphosphate hydrolysis which occurs prior to release of AdoMet from the enzyme. This is S-adenosylmethionine synthase from Sulfurovum sp. (strain NBC37-1).